Here is a 473-residue protein sequence, read N- to C-terminus: MAAKTYDAGVKDYRSIYWEPQYQVKDSDILAVFKVVPQPGVSREEAAAAVAAESSTATWTTVWTDLLTDLDYYKGRAYAIEDVPGSDEAFYAFIAYPMDLFEEGSVVNVFTSLVGNVFGFKAVRALRLEDVRFPLWFVMTCPGAPHGMKVERDLLDKYGRPLLGCTIKPKLGLSAKNYGRAVYECLRGGLDFTKDDENVNSQPFLRWRDRFLFCQEAIEKAEAETGERKGHYMNVTAGTMEEIYERAEFAKEIGTPIIMSDYLTVGWSAHTSLSRWCRKNGMLLHVHRAMHAVMDRNPNHGINFRVLAKILRLMGGDHLHSGTVVGKLEGDREATIGWINLLRDRFIKADRSRGIFFDQDWGPQPGLFPVASGGIHVWHMPALVSIFGNDSVLQFGGGTLGHPWGNAAGACANRFALEACVQARNDGRNLEKEGKEILTKAAQTSPELRMAMETWKEVRFEFDTVDKLDVQHR.

Substrate-binding residues include N116 and T166. The active-site Proton acceptor is K168. K170 provides a ligand contact to substrate. 3 residues coordinate Mg(2+): K194, D196, and E197. Position 194 is an N6-carboxylysine (K194). The Proton acceptor role is filled by H287. Residues R288, H320, and S372 each coordinate substrate.

This sequence belongs to the RuBisCO large chain family. Type I subfamily. In terms of assembly, heterohexadecamer of 8 large chains and 8 small chains. Requires Mg(2+) as cofactor.

The enzyme catalyses 2 (2R)-3-phosphoglycerate + 2 H(+) = D-ribulose 1,5-bisphosphate + CO2 + H2O. The catalysed reaction is D-ribulose 1,5-bisphosphate + O2 = 2-phosphoglycolate + (2R)-3-phosphoglycerate + 2 H(+). Functionally, ruBisCO catalyzes two reactions: the carboxylation of D-ribulose 1,5-bisphosphate, the primary event in carbon dioxide fixation, as well as the oxidative fragmentation of the pentose substrate. Both reactions occur simultaneously and in competition at the same active site. The protein is Ribulose bisphosphate carboxylase large chain 2 of Cereibacter sphaeroides (strain ATCC 17025 / ATH 2.4.3) (Rhodobacter sphaeroides).